The following is a 354-amino-acid chain: Transcription factor ATOH1 (354 aa).

Residues 1–21 (MSRLLHAEEWAEVKELGDHHR) show a composition bias toward basic and acidic residues. Disordered stretches follow at residues 1 to 55 (MSRL…ELSL) and 91 to 122 (EAAA…PGPV). Positions 26-38 (HHLPQPPPPPQPP) are enriched in pro residues. The segment covering 94 to 107 (APRDEVDGRGELVR) has biased composition (basic and acidic residues). Over residues 108 to 122 (RSSGGASSSKSPGPV) the composition is skewed to low complexity. In terms of domain architecture, bHLH spans 159–211 (QRRLAANARERRRMHGLNHAFDQLRNVIPSFNNDKKLSKYETLQMAQIYINAL). Disordered stretches follow at residues 216-277 (QTPS…TRFS) and 312-354 (SPSL…DEAS). Positions 250–264 (NATAAGAQQASGGSQ) are enriched in low complexity. The segment covering 335–354 (HRSDGEFSPHSHYSDSDEAS) has biased composition (basic and acidic residues).

As to quaternary structure, efficient DNA binding requires dimerization with another bHLH protein.

The protein resides in the nucleus. In terms of biological role, transcriptional regulator. Activates E box-dependent transcription in collaboration with TCF3/E47, but the activity is completely antagonized by the negative regulator of neurogenesis HES1. Plays a role in the differentiation of subsets of neural cells by activating E box-dependent transcription. This Homo sapiens (Human) protein is Transcription factor ATOH1.